We begin with the raw amino-acid sequence, 167 residues long: Urease accessory protein UreE (167 aa).

The protein belongs to the UreE family.

Its subcellular location is the cytoplasm. Involved in urease metallocenter assembly. Binds nickel. Probably functions as a nickel donor during metallocenter assembly. This Pseudomonas aeruginosa (strain UCBPP-PA14) protein is Urease accessory protein UreE.